Reading from the N-terminus, the 508-residue chain is MFS-type transporter penM (508 aa).

The segment at 1-60 (MKDGEETPSVDGSTSASNREKLGTDLEIGPVDLSDGGKEEKVKDPNLVDWDGPDDPENPL) is disordered. A compositionally biased stretch (basic and acidic residues) spans 35–46 (DGGKEEKVKDPN). Asn-61 carries an N-linked (GlcNAc...) asparagine glycan. The helical transmembrane segment at 73–93 (SIALITFLTPLGSSMFAPGVG) threads the bilayer. Asn-100 carries an N-linked (GlcNAc...) asparagine glycan. The next 6 membrane-spanning stretches (helical) occupy residues 108–128 (SFVVSVYLLGYCFGPLIIAPL), 143–163 (ILYVIWTIACAFAPEIGSLVV), 166–186 (FFAGLAGSCPLTIGAGSIADM), 197–217 (AAWALGPLIGPVVGPVAGAYL), 225–245 (WSFYVLAMAAGAITISSLFSI), and 299–319 (PIVFLLSLYVGVIYGYLYLLF). The Peroxisomal targeting signal signature appears at 293-307 (KMLFRSPIVFLLSLY). N-linked (GlcNAc...) asparagine glycosylation occurs at Asn-331. The next 5 helical transmembrane spans lie at 335 to 355 (GAVGLTYLGLGVGSLIGLFLI), 379 to 399 (LPPMVPGAIFVPISLFMYGWT), 407 to 427 (IVPIIGTSFLGTGMMITFMCV), 435 to 457 (FTNYAASVMAANTVFRSLAGALL), and 475 to 495 (SLLGFIALAFCALPVIFWIYG).

It belongs to the major facilitator superfamily.

It localises to the peroxisome membrane. Its function is as follows. MFS-type transporter involved in penicillin production, most likely through the translocation of isopenicillin N from the cytosol to the peroxisomal lumen across the peroxisomal membrane. This Penicillium rubens (strain ATCC 28089 / DSM 1075 / NRRL 1951 / Wisconsin 54-1255) (Penicillium chrysogenum) protein is MFS-type transporter penM.